A 488-amino-acid chain; its full sequence is Proline--tRNA ligase (488 aa).

It belongs to the class-II aminoacyl-tRNA synthetase family. ProS type 3 subfamily. In terms of assembly, homodimer.

The protein resides in the cytoplasm. It carries out the reaction tRNA(Pro) + L-proline + ATP = L-prolyl-tRNA(Pro) + AMP + diphosphate. Functionally, catalyzes the attachment of proline to tRNA(Pro) in a two-step reaction: proline is first activated by ATP to form Pro-AMP and then transferred to the acceptor end of tRNA(Pro). In Symbiobacterium thermophilum (strain DSM 24528 / JCM 14929 / IAM 14863 / T), this protein is Proline--tRNA ligase.